Here is a 133-residue protein sequence, read N- to C-terminus: ATP synthase epsilon chain, chloroplastic (133 aa).

This sequence belongs to the ATPase epsilon chain family. In terms of assembly, F-type ATPases have 2 components, CF(1) - the catalytic core - and CF(0) - the membrane proton channel. CF(1) has five subunits: alpha(3), beta(3), gamma(1), delta(1), epsilon(1). CF(0) has three main subunits: a, b and c.

It localises to the plastid. The protein resides in the chloroplast thylakoid membrane. Produces ATP from ADP in the presence of a proton gradient across the membrane. This is ATP synthase epsilon chain, chloroplastic from Ipomoea batatas (Sweet potato).